A 126-amino-acid chain; its full sequence is Small ribosomal subunit protein uS12 (126 aa).

D89 carries the 3-methylthioaspartic acid modification.

The protein belongs to the universal ribosomal protein uS12 family. As to quaternary structure, part of the 30S ribosomal subunit. Contacts proteins S8 and S17. May interact with IF1 in the 30S initiation complex.

Its function is as follows. With S4 and S5 plays an important role in translational accuracy. Functionally, interacts with and stabilizes bases of the 16S rRNA that are involved in tRNA selection in the A site and with the mRNA backbone. Located at the interface of the 30S and 50S subunits, it traverses the body of the 30S subunit contacting proteins on the other side and probably holding the rRNA structure together. The combined cluster of proteins S8, S12 and S17 appears to hold together the shoulder and platform of the 30S subunit. The polypeptide is Small ribosomal subunit protein uS12 (Polynucleobacter asymbioticus (strain DSM 18221 / CIP 109841 / QLW-P1DMWA-1) (Polynucleobacter necessarius subsp. asymbioticus)).